The following is a 944-amino-acid chain: E3 ubiquitin-protein ligase HACE1 (944 aa).

ANK repeat units follow at residues L23–F55, V64–Y93, S97–I126, E130–V159, M163–R192, S196–D226, and N228–P253. The 336-residue stretch at N609–A944 folds into the HECT domain. Catalysis depends on C911, which acts as the Glycyl thioester intermediate.

The protein localises to the golgi apparatus. It is found in the golgi stack membrane. The protein resides in the cytoplasm. It localises to the endoplasmic reticulum. The enzyme catalyses S-ubiquitinyl-[E2 ubiquitin-conjugating enzyme]-L-cysteine + [acceptor protein]-L-lysine = [E2 ubiquitin-conjugating enzyme]-L-cysteine + N(6)-ubiquitinyl-[acceptor protein]-L-lysine.. Its pathway is protein modification; protein ubiquitination. Functionally, E3 ubiquitin-protein ligase involved in Golgi membrane fusion and regulation of small GTPases. Acts as a regulator of Golgi membrane dynamics during the cell cycle: recruited to Golgi membrane by Rab proteins and regulates postmitotic Golgi membrane fusion. Acts by mediating ubiquitination during mitotic Golgi disassembly, ubiquitination serving as a signal for Golgi reassembly later, after cell division. The sequence is that of E3 ubiquitin-protein ligase HACE1 (hace1) from Xenopus laevis (African clawed frog).